Here is a 158-residue protein sequence, read N- to C-terminus: C-type lectin galactose-binding isoform (158 aa).

The signal sequence occupies residues 1–20 (MGRFLLVTLSLLVVAFSLNG). 3 disulfide bridges follow: Cys26/Cys37, Cys54/Cys154, and Cys129/Cys146. Residues 33-155 (KNGYCYKVFK…CTALRPFLCQ (123 aa)) enclose the C-type lectin domain. Residues Gln119, Asp121, Glu127, Asn142, and Asp143 each coordinate Ca(2+). The Galactose-binding motif lies at 119–121 (QPD).

This sequence belongs to the true venom lectin family. As to quaternary structure, homodimer; disulfide-linked. In terms of tissue distribution, expressed by the venom gland.

The protein localises to the secreted. Its function is as follows. Galactose-binding lectin that binds to and agglutinates erythrocytes in a calcium-dependent manner. This is C-type lectin galactose-binding isoform from Hoplocephalus stephensii (Stephens's banded snake).